The chain runs to 196 residues: MTTIIGIKARDGVVLASDKQASMGNIVEDKRAQKIIPITDYILLAGSGTVADLQHIAKILKTELKLRELYSRRTMNVIEAANLLSHLLYQNRFYLNPLGLLIAGPINSKEFGIYSLDGIGAISEIKDYFAEGSGGVIALGTLEAEYNPDITVRDAIKLAEKALKSSIARDVFSGYGIEIYTITKKGVEKLFLEAQK.

Position 1 (methionine 1) is a propeptide, removed in mature form; by autocatalysis. The active-site Nucleophile is threonine 2.

Belongs to the peptidase T1B family. In terms of assembly, the 20S proteasome core is composed of 14 alpha and 14 beta subunits that assemble into four stacked heptameric rings, resulting in a barrel-shaped structure. The two inner rings, each composed of seven catalytic beta subunits, are sandwiched by two outer rings, each composed of seven alpha subunits. The catalytic chamber with the active sites is on the inside of the barrel. Has a gated structure, the ends of the cylinder being occluded by the N-termini of the alpha-subunits. Is capped at one or both ends by the proteasome regulatory ATPase, PAN.

It is found in the cytoplasm. The catalysed reaction is Cleavage of peptide bonds with very broad specificity.. Its activity is regulated as follows. The formation of the proteasomal ATPase PAN-20S proteasome complex, via the docking of the C-termini of PAN into the intersubunit pockets in the alpha-rings, triggers opening of the gate for substrate entry. Interconversion between the open-gate and close-gate conformations leads to a dynamic regulation of the 20S proteasome proteolysis activity. Component of the proteasome core, a large protease complex with broad specificity involved in protein degradation. In Nanoarchaeum equitans (strain Kin4-M), this protein is Proteasome subunit beta.